The primary structure comprises 215 residues: High mobility group protein B1 (215 aa).

Residues 9–79 constitute a DNA-binding region (HMG box 1); the sequence is PRGKMSSYAF…RYEKEMKNYV (71 aa). Position 23 is a cysteine sulfonic acid (-SO3H); alternate (Cys23). A disulfide bridge connects residues Cys23 and Cys45. Residues 27 to 43 are NLS 1; it reads HKKKHPDASVNFSEFSK. The Nuclear localization signal (NLS) 1 signature appears at 27–43; it reads HKKKHPDASVNFSEFSK. Cys45 bears the Cysteine sulfonic acid (-SO3H); alternate mark. Residues 75 to 95 form a disordered region; the sequence is MKNYVPPKGETKKKFKDPNAP. A compositionally biased stretch (basic and acidic residues) spans 83 to 94; that stretch reads GETKKKFKDPNA. A DNA-binding region (HMG box 2) is located at residues 95–163; sequence PKRPPSAFFL…KYEKDIAAYR (69 aa). Cys106 is subject to Cysteine sulfonic acid (-SO3H). Positions 166-179 are enriched in basic and acidic residues; the sequence is GKVDAGKKVVAKAE. The interval 166-215 is disordered; the sequence is GKVDAGKKVVAKAEKSKKKKEEEEDEDEDEEDEEDEEEEEEEEEDDDDDE. The NLS 2 stretch occupies residues 178 to 184; that stretch reads AEKSKKK. The Nuclear localization signal (NLS) 2 motif lies at 178 to 184; it reads AEKSKKK. A compositionally biased stretch (acidic residues) spans 187–215; sequence EEEDEDEDEEDEEDEEEEEEEEEDDDDDE. The interval 196 to 210 is involved in intramolecular interaction with K-3; it reads EDEEDEEEEEEEEED. The tract at residues 211 to 215 is involved in interaction with histone H3; sequence DDDDE.

The protein belongs to the HMGB family. Post-translationally, reduction/oxidation of cysteine residues Cys-23, Cys-45 and Cys-106 and a possible intramolecular disulfide bond involving Cys-23 and Cys-45 give rise to different redox forms with specific functional activities: 1- fully reduced HMGB1 (HMGB1C23hC45hC106h), 2- disulfide HMGB1 (HMGB1C23-C45C106h) and 3- sulfonyl HMGB1 (HMGB1C23soC45soC106so).

It localises to the nucleus. The protein resides in the chromosome. The protein localises to the cytoplasm. It is found in the secreted. Multifunctional redox sensitive protein with various roles in different cellular compartments. Nuclear functions are attributed to fully reduced HGMB1. Associates with chromatin and binds DNA with a preference to non-canonical DNA structures such as single-stranded DNA, DNA-containing cruciforms or bent structures, supercoiled DNA and ZDNA. Can bent DNA and enhance DNA flexibility by looping thus providing a mechanism to promote activities on various gene promoters. Can restructure the canonical nucleosome. Proposed to be an universal biosensor for nucleic acids. May promote inflammatory response to sterile and infectious signals and may be involved in the coordination and integration of innate and adaptive immune responses. In the cytoplasm may function as sensor and/or chaperone for immunogenic nucleic acids, and mediate autophagy. May act as danger associated molecular pattern (DAMP) molecule that amplifies immune responses during tissue injury. This Gallus gallus (Chicken) protein is High mobility group protein B1 (HMGB1).